The sequence spans 267 residues: Distal basal body ring component protein (267 aa).

The signal sequence occupies residues 1–29 (MKAFLFAAAATLVITALSAPAFAGTPVTL).

In terms of assembly, flaD is a subunit of the flagellar transenvelope basal body.

Its subcellular location is the periplasm. It is found in the bacterial flagellum basal body. Its function is as follows. FlaD might be the structural protein of the distal basal body ring P, or it is necessary for the assembly of the P ring. This Caulobacter vibrioides (strain ATCC 19089 / CIP 103742 / CB 15) (Caulobacter crescentus) protein is Distal basal body ring component protein (flaD).